The chain runs to 830 residues: Probable glucan 1,3-beta-glucosidase D (830 aa).

Basic and acidic residues-rich tracts occupy residues 1–11 and 74–84; these read MPGHSRSRDRL and VHEHDHDHEYD. Disordered stretches follow at residues 1–91, 127–163, and 260–297; these read MPGH…EEPW, MSGALGDDGPPPLPSDALGRGKGKKRLDRETRRQRRK, and GGPGMEMRHRGGGGPPAEGLLQKEGDWDGSTKGSSTSA. The Cytoplasmic segment spans residues 1–307; sequence MPGHSRSRDR…RPSFWKRYHK (307 aa). The span at 147 to 163 shows a compositional bias: basic residues; that stretch reads GKGKKRLDRETRRQRRK. A helical; Signal-anchor for type II membrane protein membrane pass occupies residues 308 to 328; that stretch reads TFIFFAILIVLAAIAIPVGII. Residues 329–830 are Extracellular-facing; it reads EARRLHGTSG…PSFGNLPEYY (502 aa). Asn341, Asn376, Asn381, Asn393, Asn397, Asn546, and Asn558 each carry an N-linked (GlcNAc...) asparagine glycan. The Proton donor role is filled by Glu597. 3 N-linked (GlcNAc...) asparagine glycosylation sites follow: Asn610, Asn669, and Asn689. Residue Glu702 is the Nucleophile of the active site.

It belongs to the glycosyl hydrolase 5 (cellulase A) family.

The protein localises to the cell membrane. It catalyses the reaction Successive hydrolysis of beta-D-glucose units from the non-reducing ends of (1-&gt;3)-beta-D-glucans, releasing alpha-glucose.. Functionally, glucosidase involved in the degradation of cellulosic biomass. Active on lichenan. The sequence is that of Probable glucan 1,3-beta-glucosidase D (exgD) from Aspergillus niger (strain ATCC MYA-4892 / CBS 513.88 / FGSC A1513).